The primary structure comprises 61 residues: Small ribosomal subunit protein uS14 (61 aa).

Positions 24, 27, 40, and 43 each coordinate Zn(2+).

This sequence belongs to the universal ribosomal protein uS14 family. Zinc-binding uS14 subfamily. Part of the 30S ribosomal subunit. Contacts proteins S3 and S10. Requires Zn(2+) as cofactor.

Functionally, binds 16S rRNA, required for the assembly of 30S particles and may also be responsible for determining the conformation of the 16S rRNA at the A site. This Trichlorobacter lovleyi (strain ATCC BAA-1151 / DSM 17278 / SZ) (Geobacter lovleyi) protein is Small ribosomal subunit protein uS14.